Reading from the N-terminus, the 82-residue chain is Defensin-like protein 156 (82 aa).

A signal peptide spans 1–27 (MAKISCSYFLVLMLVFSVFSLVEKTKG). 4 cysteine pairs are disulfide-bonded: Cys-31/Cys-77, Cys-41/Cys-60, Cys-46/Cys-71, and Cys-50/Cys-73.

The protein belongs to the DEFL family. In terms of tissue distribution, expressed in flower buds, but not in stems, roots or rosette leaves.

It is found in the secreted. This chain is Defensin-like protein 156 (LCR21), found in Arabidopsis thaliana (Mouse-ear cress).